Here is a 525-residue protein sequence, read N- to C-terminus: Protein MGF 505-6R (525 aa).

4 ANK repeats span residues 54–83, 129–158, 261–291, and 324–351; these read SINDALQLAGEEGDTDVVQLLLLWEGNLHY, ACDFICLLQHAVKYNMLSILVKYKEDLLNV, NIHRALSYAVTHNRRKILDYLIRQKNIAPNT, and KKLVEHVVNEKSTLVLKILLEKKENLVD.

This sequence belongs to the asfivirus MGF 505 family.

In terms of biological role, plays a role in virus cell tropism, and may be required for efficient virus replication in macrophages. The protein is Protein MGF 505-6R of Ornithodoros (relapsing fever ticks).